A 589-amino-acid chain; its full sequence is uncharacterized protein (589 aa).

Transmembrane regions (helical) follow at residues 90 to 110 (YIVIPGLMLSIFLAALDQTVI), 128 to 148 (SWIGTAYSLAETSILPFCGIM), 162 to 182 (IVLFLFGSAMCGAAQNMLWLV), 189 to 209 (GIGGGGIMSLVTIVIADITPL), 217 to 237 (GCMGVTWGVASVMGPLIGGAI), 245 to 265 (WIFFINLPTGGLSLALLIFFL), 284 to 304 (FVGIVTITTGVVLFLLGLNIG), 311 to 331 (AHANVLCYLIFGILCIAGFVV), 355 to 375 (VMVTSFLHYYIMSTVTYYIPI), 390 to 410 (VHTLSLAVVSSVVSAISGMGI), 418 to 438 (YPMIGGWIVLLAGTGSMIAIY), 448 to 468 (GFLALTAVGIGNLFQPNLIAI), 483 to 503 (AFMLLRNMGASVGISIGAVIY), and 545 to 565 (IRTIWIVNCPVAGVGMLLSFF).

The protein belongs to the major facilitator superfamily. TCR/Tet family.

The protein resides in the membrane. This is an uncharacterized protein from Schizosaccharomyces pombe (strain 972 / ATCC 24843) (Fission yeast).